A 500-amino-acid chain; its full sequence is Cobyric acid synthase (500 aa).

One can recognise a GATase cobBQ-type domain in the interval 255–444; that stretch reads AIDIAVIRCP…MHDLFHNDAF (190 aa). Cysteine 337 serves as the catalytic Nucleophile. The active site involves histidine 436.

It belongs to the CobB/CobQ family. CobQ subfamily.

It functions in the pathway cofactor biosynthesis; adenosylcobalamin biosynthesis. Its function is as follows. Catalyzes amidations at positions B, D, E, and G on adenosylcobyrinic A,C-diamide. NH(2) groups are provided by glutamine, and one molecule of ATP is hydrogenolyzed for each amidation. This is Cobyric acid synthase from Geobacillus thermodenitrificans (strain NG80-2).